The primary structure comprises 267 residues: Acetyl-coenzyme A carboxylase carboxyl transferase subunit beta 1 (267 aa).

A CoA carboxyltransferase N-terminal domain is found at 9 to 267; that stretch reads TWQACPKCGR…NYGIGRSAHG (259 aa). The Zn(2+) site is built by cysteine 13, cysteine 16, cysteine 31, and cysteine 34. A C4-type zinc finger spans residues 13–34; the sequence is CPKCGRHVHQRQWGTYQQCPYC.

This sequence belongs to the AccD/PCCB family. As to quaternary structure, acetyl-CoA carboxylase is a heterohexamer composed of biotin carboxyl carrier protein (AccB), biotin carboxylase (AccC) and two subunits each of ACCase subunit alpha (AccA) and ACCase subunit beta (AccD). The cofactor is Zn(2+).

The protein resides in the cytoplasm. It carries out the reaction N(6)-carboxybiotinyl-L-lysyl-[protein] + acetyl-CoA = N(6)-biotinyl-L-lysyl-[protein] + malonyl-CoA. It participates in lipid metabolism; malonyl-CoA biosynthesis; malonyl-CoA from acetyl-CoA: step 1/1. Its function is as follows. Component of the acetyl coenzyme A carboxylase (ACC) complex. Biotin carboxylase (BC) catalyzes the carboxylation of biotin on its carrier protein (BCCP) and then the CO(2) group is transferred by the transcarboxylase to acetyl-CoA to form malonyl-CoA. The sequence is that of Acetyl-coenzyme A carboxylase carboxyl transferase subunit beta 1 from Lactiplantibacillus plantarum (strain JDM1) (Lactobacillus plantarum).